The following is a 124-amino-acid chain: UPF0231 protein SO_3983 (124 aa).

It belongs to the UPF0231 family.

The sequence is that of UPF0231 protein SO_3983 from Shewanella oneidensis (strain ATCC 700550 / JCM 31522 / CIP 106686 / LMG 19005 / NCIMB 14063 / MR-1).